Consider the following 156-residue polypeptide: Small ribosomal subunit protein uS7 (156 aa).

The protein belongs to the universal ribosomal protein uS7 family. As to quaternary structure, part of the 30S ribosomal subunit. Contacts proteins S9 and S11.

In terms of biological role, one of the primary rRNA binding proteins, it binds directly to 16S rRNA where it nucleates assembly of the head domain of the 30S subunit. Is located at the subunit interface close to the decoding center, probably blocks exit of the E-site tRNA. In Sphingopyxis alaskensis (strain DSM 13593 / LMG 18877 / RB2256) (Sphingomonas alaskensis), this protein is Small ribosomal subunit protein uS7.